Consider the following 408-residue polypeptide: Succinylornithine transaminase (408 aa).

An N6-(pyridoxal phosphate)lysine modification is found at Lys-252.

The protein belongs to the class-III pyridoxal-phosphate-dependent aminotransferase family. AstC subfamily. The cofactor is pyridoxal 5'-phosphate.

It carries out the reaction N(2)-succinyl-L-ornithine + 2-oxoglutarate = N-succinyl-L-glutamate 5-semialdehyde + L-glutamate. It functions in the pathway amino-acid degradation; L-arginine degradation via AST pathway; L-glutamate and succinate from L-arginine: step 3/5. Its function is as follows. Catalyzes the transamination of N(2)-succinylornithine and alpha-ketoglutarate into N(2)-succinylglutamate semialdehyde and glutamate. Can also act as an acetylornithine aminotransferase. This is Succinylornithine transaminase from Salmonella choleraesuis (strain SC-B67).